The primary structure comprises 957 residues: MTQTLSQLENSGAFIERHIGPDAAQQQEMLNAVGAQSLNALTGQIVPKDIQLATPPQVGAPATEYAALAELKAIASRNKRFTSYIGMGYTAVQLPPVILRNMLENPGWYTAYTPYQPEVSQGRLEALLNFQQVTLDLTGLDMASASLLDEATAAAEAMAMAKRVSKLKNANRFFVASNVHPQTLDVVRTRAETFGFEVIVDDAQKVLDHQDVFGVLLQQVGTTGEIHDYTALISELKSRKIVVSVAADIMALVLLTAPGKQGADIVFGSAQRFGVPMGYGGPHAAFFAAKDEYKRSMPGRIIGVSKDAAGNTALRMAMQTREQHIRREKANSNICTSQVLLANIASLYAVYHGPVGLKRIANRIHRLTDILAAGLQQKGLKLRHAHYFDTLCVEVADKAGVLTRAEAAEINLRSDILNAVGITLDETTTRENVMQLFSVLLGDNHGLEIDTLDKDVAHDSRSIQPAMLRDDEILTHPVFNRYHSETEMMRYMHSLERKDLALNQAMIPLGSCTMKLNAAAEMIPITWTEFAELHPFCPPEQAEGYQQMIAQLADWLVKLTGYDAVCMQPNSGAQGEYAGLLAIRHYHESRNEGHRDICLIPASAHGTNPASAHMAGMQVVVVACDKNGNIDLTDLRAKAEQAGDNLSCIMVTYPSTHGVYEETIREVCEVVHQFGGQVYLDGANMNAQVGITSPGFIGADVSHLNLHKTFCIPHGGGGPGMGPIGVKAHLAPFVPGHSVVQIEGMLTRQGAVSAAPFGSASILPISWMYIRMMGAEGLKKASQVAILNANYIASRLQDAFPVLYTGRDGRVAHECILDIRPLKEETGISELDIAKRLIDYGFHAPTMSFPVAGTLMVEPTESESKVELDRFIDAMLAIRAEIDQVKAGVWPLEDNPLVNAPHIQSELVAEWAHPYSREVAVFPAGVADKYWPTVKRLDDVYGDRNLFCSCVPISEYQ.

Lys-708 carries the N6-(pyridoxal phosphate)lysine modification.

This sequence belongs to the GcvP family. The glycine cleavage system is composed of four proteins: P, T, L and H. Requires pyridoxal 5'-phosphate as cofactor.

The enzyme catalyses N(6)-[(R)-lipoyl]-L-lysyl-[glycine-cleavage complex H protein] + glycine + H(+) = N(6)-[(R)-S(8)-aminomethyldihydrolipoyl]-L-lysyl-[glycine-cleavage complex H protein] + CO2. Functionally, the glycine cleavage system catalyzes the degradation of glycine. The P protein binds the alpha-amino group of glycine through its pyridoxal phosphate cofactor; CO(2) is released and the remaining methylamine moiety is then transferred to the lipoamide cofactor of the H protein. This Shigella flexneri protein is Glycine dehydrogenase (decarboxylating).